The primary structure comprises 276 residues: uncharacterized protein (276 aa).

Y47 serves as the catalytic Proton donor. H110 is a binding site for substrate.

This sequence belongs to the aldo/keto reductase family.

It localises to the cytoplasm. Its subcellular location is the nucleus. This is an uncharacterized protein from Schizosaccharomyces pombe (strain 972 / ATCC 24843) (Fission yeast).